The chain runs to 122 residues: Acidic phospholipase A2 5 (122 aa).

Disulfide bonds link C26–C115, C28–C44, C43–C95, C49–C122, C50–C88, C57–C81, and C75–C86. Residues F27, G29, and G31 each contribute to the Ca(2+) site. H47 is an active-site residue. D48 provides a ligand contact to Ca(2+). D89 is a catalytic residue.

This sequence belongs to the phospholipase A2 family. Group II subfamily. D49 sub-subfamily. As to quaternary structure, monomer (predominant). Non-covalently linked homodimers are also observed. It depends on Ca(2+) as a cofactor. As to expression, expressed by the venom gland.

Its subcellular location is the secreted. It catalyses the reaction a 1,2-diacyl-sn-glycero-3-phosphocholine + H2O = a 1-acyl-sn-glycero-3-phosphocholine + a fatty acid + H(+). With respect to regulation, preincubation with heparin slightly increase the enzymatic activity. Functionally, snake venom phospholipase A2 (PLA2) that inhibits platelet aggregation induced by ADP, arachidonic acid and PAF. Acts in a enzymatic independent manner on a proteinase-activated receptor (PAR1, F2R) to evoke calcium release through the inositol 1,4,5-trisphosphate receptor (ITPR1, IP3R) and induces mouse aorta contraction. PAR1, phospholipase C and IP3R inhibitors suppress PA2-induced aorta contraction. PLA2 catalyzes the calcium-dependent hydrolysis of the 2-acyl groups in 3-sn-phosphoglycerides. The polypeptide is Acidic phospholipase A2 5 (Trimeresurus stejnegeri (Chinese green tree viper)).